A 279-amino-acid chain; its full sequence is Rhamnulose-1-phosphate aldolase (279 aa).

Glu-115 is a catalytic residue. Zn(2+) contacts are provided by His-138, His-140, and His-209.

Belongs to the aldolase class II family. RhaD subfamily. Zn(2+) is required as a cofactor.

The protein resides in the cytoplasm. It catalyses the reaction L-rhamnulose 1-phosphate = (S)-lactaldehyde + dihydroxyacetone phosphate. It functions in the pathway carbohydrate degradation; L-rhamnose degradation; glycerone phosphate from L-rhamnose: step 3/3. Functionally, catalyzes the reversible cleavage of L-rhamnulose-1-phosphate to dihydroxyacetone phosphate (DHAP) and L-lactaldehyde. The protein is Rhamnulose-1-phosphate aldolase of Enterococcus faecalis (strain ATCC 700802 / V583).